Here is a 485-residue protein sequence, read N- to C-terminus: Cysteine--tRNA ligase (485 aa).

Residue C28 coordinates Zn(2+). The short motif at M30–H40 is the 'HIGH' region element. Zn(2+) is bound by residues C209, H234, and E238. The 'KMSKS' region motif lies at K266–S270. Residue K269 coordinates ATP.

Belongs to the class-I aminoacyl-tRNA synthetase family. As to quaternary structure, monomer. It depends on Zn(2+) as a cofactor.

It is found in the cytoplasm. It catalyses the reaction tRNA(Cys) + L-cysteine + ATP = L-cysteinyl-tRNA(Cys) + AMP + diphosphate. The protein is Cysteine--tRNA ligase of Nitrosococcus oceani (strain ATCC 19707 / BCRC 17464 / JCM 30415 / NCIMB 11848 / C-107).